Reading from the N-terminus, the 164-residue chain is V-type proton ATPase subunit c' (164 aa).

The Lumenal segment spans residues Met1 to Pro15. Residues Phe16 to Gly36 traverse the membrane as a helical segment. At Thr37–Ser58 the chain is on the cytoplasmic side. The chain crosses the membrane as a helical span at residues Leu59–Val79. At Ala80–His97 the chain is on the lumenal side. The helical transmembrane segment at Leu98–Val118 threads the bilayer. Residues Gly119 to Gly135 lie on the Cytoplasmic side of the membrane. The helical transmembrane segment at Ile136–Ile156 threads the bilayer. Residues Leu157–Asn164 lie on the Lumenal side of the membrane.

It belongs to the V-ATPase proteolipid subunit family. As to quaternary structure, V-ATPase is a heteromultimeric enzyme composed of a peripheral catalytic V1 complex (components A to H) attached to an integral membrane V0 proton pore complex (components: a, c, c', c'', d, e, f and VOA1). The decameric c-ring forms the proton-conducting pore, and is composed of eight proteolipid subunits c, one subunit c' and one subunit c''.

It localises to the vacuole membrane. Proton-conducting pore forming subunit of the V0 complex of vacuolar(H+)-ATPase (V-ATPase), a multisubunit enzyme composed of a peripheral complex (V1) that hydrolyzes ATP and a membrane integral complex (V0) that translocates protons. V-ATPase is responsible for acidifying and maintaining the pH of intracellular compartments. In Eremothecium gossypii (strain ATCC 10895 / CBS 109.51 / FGSC 9923 / NRRL Y-1056) (Yeast), this protein is V-type proton ATPase subunit c' (VMA11).